Consider the following 220-residue polypeptide: Protein CREG1 (220 aa).

An N-terminal signal peptide occupies residues 1-31; sequence MAARAPELARSLLAALLAPALVALLVSPASG. The segment at 30-53 is disordered; sequence SGRGGRDHGDWDVDRRLPPLPPRE. The span at 33-53 shows a compositional bias: basic and acidic residues; the sequence is GGRDHGDWDVDRRLPPLPPRE. N-linked (GlcNAc...) asparagine glycans are attached at residues asparagine 160 and asparagine 216.

Belongs to the CREG family. In terms of assembly, homodimer. Interacts with IGF2R; the interaction is dependent on glycosylation. N-glycosylated. Widely expressed.

It is found in the secreted. Its function is as follows. May contribute to the transcriptional control of cell growth and differentiation. Antagonizes transcriptional activation and cellular transformation by the adenovirus E1A protein. The transcriptional control activity of cell growth requires interaction with IGF2R. This is Protein CREG1 (Creg1) from Mus musculus (Mouse).